The chain runs to 89 residues: Small ribosomal subunit protein uS15 (89 aa).

The protein belongs to the universal ribosomal protein uS15 family. Part of the 30S ribosomal subunit. Forms a bridge to the 50S subunit in the 70S ribosome, contacting the 23S rRNA.

Functionally, one of the primary rRNA binding proteins, it binds directly to 16S rRNA where it helps nucleate assembly of the platform of the 30S subunit by binding and bridging several RNA helices of the 16S rRNA. Forms an intersubunit bridge (bridge B4) with the 23S rRNA of the 50S subunit in the ribosome. The polypeptide is Small ribosomal subunit protein uS15 (Exiguobacterium sibiricum (strain DSM 17290 / CCUG 55495 / CIP 109462 / JCM 13490 / 255-15)).